A 159-amino-acid chain; its full sequence is Small ribosomal subunit protein uS7 (159 aa).

It belongs to the universal ribosomal protein uS7 family. Part of the 30S ribosomal subunit. Contacts proteins S9 and S11.

Functionally, one of the primary rRNA binding proteins, it binds directly to 16S rRNA where it nucleates assembly of the head domain of the 30S subunit. Is located at the subunit interface close to the decoding center, probably blocks exit of the E-site tRNA. The protein is Small ribosomal subunit protein uS7 of Elusimicrobium minutum (strain Pei191).